We begin with the raw amino-acid sequence, 355 residues long: DNA polymerase IV (355 aa).

The 182-residue stretch at 4-185 (IIHIDMDCYF…LSLGKIPGVG (182 aa)) folds into the UmuC domain. 2 residues coordinate Mg(2+): Asp-8 and Asp-103. Glu-104 is an active-site residue.

The protein belongs to the DNA polymerase type-Y family. In terms of assembly, monomer. It depends on Mg(2+) as a cofactor.

The protein resides in the cytoplasm. It carries out the reaction DNA(n) + a 2'-deoxyribonucleoside 5'-triphosphate = DNA(n+1) + diphosphate. Its function is as follows. Poorly processive, error-prone DNA polymerase involved in untargeted mutagenesis. Copies undamaged DNA at stalled replication forks, which arise in vivo from mismatched or misaligned primer ends. These misaligned primers can be extended by PolIV. Exhibits no 3'-5' exonuclease (proofreading) activity. May be involved in translesional synthesis, in conjunction with the beta clamp from PolIII. The polypeptide is DNA polymerase IV (Shewanella amazonensis (strain ATCC BAA-1098 / SB2B)).